We begin with the raw amino-acid sequence, 219 residues long: MKITYLGHACVVLQGSKCVLIDPFIPEGEIRVTPDLVAVTHAHADHMGIAASYTAPIITNNEIAHYLRGKGCITEAMNIGGTIVVDGISFTMTQAIHSSWLEDEGIGMYGGSAAGFVISMDGRTVYHAGDTGLFSDMRLIGELYHPDVALIPIGGRFTMGPREGMMAAEFIGAPVVIPIHYNTFDKIRQDVSEFARAINETTDMKTVILEPGMEYEIKK.

Belongs to the UPF0173 family.

This chain is UPF0173 metal-dependent hydrolase Mhun_1705, found in Methanospirillum hungatei JF-1 (strain ATCC 27890 / DSM 864 / NBRC 100397 / JF-1).